A 245-amino-acid polypeptide reads, in one-letter code: Dehydrogenase/reductase SDR family member 6 (245 aa).

Residues 16–18 (QGI), Asp37, and Asp58 contribute to the NAD(+) site. Arg144 is a binding site for substrate. Residue Tyr147 is the Proton acceptor of the active site. NAD(+)-binding positions include Lys151 and 180 to 184 (VDTPS). Arg188 and Arg205 together coordinate substrate.

Belongs to the short-chain dehydrogenases/reductases (SDR) family. In terms of assembly, homotetramer.

It is found in the cytoplasm. The enzyme catalyses cis-4-hydroxy-L-proline + NAD(+) = 4-oxo-L-proline + NADH + H(+). It carries out the reaction (R)-3-hydroxybutanoate + NAD(+) = acetoacetate + NADH + H(+). It participates in amino-acid metabolism. Its pathway is siderophore biosynthesis. In terms of biological role, NAD(H)-dependent dehydrogenase/reductase with a preference for cyclic substrates. Catalyzes stereoselective conversion of 4-oxo-L-proline to cis-4-hydroxy-L-proline, likely a detoxification mechanism for ketoprolines. Mediates the formation of 2,5-dihydroxybenzoate (2,5-DHBA), a siderophore that chelates free cytoplasmic iron, thereby regulating iron transport and homeostasis while protecting cells against free radical-induced oxidative stress. The iron-siderophore complex is imported into mitochondria, providing an iron source for mitochondrial metabolic processes in particular heme synthesis. May act as a 3-hydroxybutyrate dehydrogenase. The chain is Dehydrogenase/reductase SDR family member 6 (bdh2) from Aquarana catesbeiana (American bullfrog).